A 376-amino-acid polypeptide reads, in one-letter code: Inactive 2'-5'-oligoadenylate synthase 1B (376 aa).

The Cytoplasmic segment spans residues 1 to 351 (MEQDLRSIPA…VPTEVGVPMK (351 aa)). A helical; Anchor for type IV membrane protein membrane pass occupies residues 352-370 (YLLCRIFWLLFWSLFHFIF). The Extracellular portion of the chain corresponds to 371–376 (GKTSSG).

This sequence belongs to the 2-5A synthase family. Interacts with OSBPL1A and ABCF3. Highly expressed in lung, spleen and thymus. Also detected at lower levels in heart, kidney, liver, lung, skeletal muscle, testes, uterus and ovaries.

Its subcellular location is the endoplasmic reticulum membrane. In terms of biological role, does not have 2'-5'-OAS activity, but can bind double-stranded RNA. The full-length protein displays antiviral activity against flaviviruses such as west Nile virus (WNV) via an alternative antiviral pathway independent of RNase L. The truncated form of the protein lacks antiviral activity. The polypeptide is Inactive 2'-5'-oligoadenylate synthase 1B (Oas1b) (Mus musculus (Mouse)).